Consider the following 249-residue polypeptide: 3-deoxy-D-manno-octulosonic acid kinase (249 aa).

Residue Asp-175 is part of the active site.

It belongs to the protein kinase superfamily. KdkA/RfaP family.

Its subcellular location is the cell inner membrane. It catalyses the reaction an alpha-Kdo-(2-&gt;6)-lipid IVA + ATP = a 4-O-phospho-alpha-Kdo-(2-&gt;6)-lipid IVA + ADP + H(+). It functions in the pathway bacterial outer membrane biogenesis; LPS core biosynthesis. In terms of biological role, catalyzes the ATP-dependent phosphorylation of the 3-deoxy-D-manno-octulosonic acid (Kdo) residue in Kdo-lipid IV(A) at the 4-OH position. The sequence is that of 3-deoxy-D-manno-octulosonic acid kinase from Xylella fastidiosa (strain M23).